The chain runs to 416 residues: Argininosuccinate synthase (416 aa).

Residues 19-27 and A46 each bind ATP; that span reads AYSGGLDTS. L-citrulline is bound by residues Y97 and S102. G127 contributes to the ATP binding site. The L-aspartate site is built by T129, N133, and D134. N133 contacts L-citrulline. The L-citrulline site is built by R137, S188, S197, E273, and Y285.

This sequence belongs to the argininosuccinate synthase family. Type 1 subfamily. Homotetramer.

The protein resides in the cytoplasm. The enzyme catalyses L-citrulline + L-aspartate + ATP = 2-(N(omega)-L-arginino)succinate + AMP + diphosphate + H(+). The protein operates within amino-acid biosynthesis; L-arginine biosynthesis; L-arginine from L-ornithine and carbamoyl phosphate: step 2/3. This Granulibacter bethesdensis (strain ATCC BAA-1260 / CGDNIH1) protein is Argininosuccinate synthase.